A 128-amino-acid polypeptide reads, in one-letter code: Saitohin (128 aa).

Residues 77 to 87 (SYSSEENSRNG) are compositionally biased toward polar residues. Positions 77 to 128 (SYSSEENSRNGAEQGRQLSIEGPFQGQNCPSHPAAALPLPMRGESQATSCQV) are disordered.

As to quaternary structure, interacts with PRDX6.

The protein localises to the cytoplasm. It localises to the nucleus. This Pan troglodytes (Chimpanzee) protein is Saitohin (STH).